Consider the following 1326-residue polypeptide: Paired amphipathic helix protein Sin3-like 4 (1326 aa).

3 consecutive PAH domains span residues 8 to 78 (QKLT…LPKG), 95 to 165 (KPVE…LPDT), and 292 to 367 (IPSS…LAQC). Disordered regions lie at residues 272-299 (DDDSAEMSDQAREGDKFSGAIPSSSTYD), 715-812 (VPSR…RAET), 844-864 (SVAGLSNSNPKPALTSGTEEL), and 927-1000 (SKSK…EGDM). Positions 721–737 (GAEDREDAVKSTNHDRE) are enriched in basic and acidic residues. Composition is skewed to polar residues over residues 744 to 757 (SPQNGASIANSMRS), 781 to 805 (SSKTSDALLSCDNTQNDKMPKNLTT), 844 to 861 (SVAGLSNSNPKPALTSGT), and 942 to 961 (PRSSDGSGNTSHNGDVSGTD). Residues 967–981 (DCYREDDIDHNKVES) show a composition bias toward basic and acidic residues.

Its subcellular location is the nucleus. Its function is as follows. Acts as a transcriptional repressor. Plays roles in regulating gene expression and genome stability. This chain is Paired amphipathic helix protein Sin3-like 4 (SNL4), found in Arabidopsis thaliana (Mouse-ear cress).